We begin with the raw amino-acid sequence, 1017 residues long: Fanconi-associated nuclease 1 (1017 aa).

Over residues 1–10 the composition is skewed to basic and acidic residues; that stretch reads MMSEGKPPDK. A disordered region spans residues 1-23; it reads MMSEGKPPDKKRPRRSLSISKNK. Residues 11–23 show a composition bias toward basic residues; the sequence is KRPRRSLSISKNK. Residues 14-22 carry the D-box motif; sequence RRSLSISKN. The segment at 41 to 69 adopts a UBZ4-type zinc-finger fold; the sequence is KLACPVCSKMVPRYDLNRHLDEMCANNDF. Positions 44, 47, 59, and 64 each coordinate Zn(2+). Disordered stretches follow at residues 95–121 and 170–189; these read EDVT…KREV and IDKD…STVV. Over residues 179–189 the composition is skewed to polar residues; it reads SSPQSSKSTVV. Position 180 is a phosphoserine (Ser-180). The KEN box motif lies at 212–214; sequence KEN. Residues 671 to 696 adopt a coiled-coil conformation; that stretch reads SRFVEILQRLHMYEEAVRELESLLSQ. Mn(2+)-binding residues include Glu-834, Asp-960, Glu-975, and Val-976. The VRR-NUC domain maps to 895–1007; that stretch reads EESLRAWVAA…GAEVEVCHVV (113 aa).

The protein belongs to the FAN1 family. In terms of assembly, interacts with FANCD2 (when monoubiquitinated). Interacts with FANCI, MLH1, MLH3 and PMS2. Mn(2+) serves as cofactor. It depends on Mg(2+) as a cofactor. Post-translationally, ubiquitinated and degraded during mitotic exit by the APC/C-Cdh1 complex.

It is found in the nucleus. It carries out the reaction Hydrolytically removes 5'-nucleotides successively from the 3'-hydroxy termini of 3'-hydroxy-terminated oligonucleotides.. In terms of biological role, nuclease required for the repair of DNA interstrand cross-links (ICL) recruited at sites of DNA damage by monoubiquitinated FANCD2. Specifically involved in repair of ICL-induced DNA breaks by being required for efficient homologous recombination, probably in the resolution of homologous recombination intermediates. Not involved in DNA double-strand breaks resection. Acts as a 5'-3' exonuclease that anchors at a cut end of DNA and cleaves DNA successively at every third nucleotide, allowing to excise an ICL from one strand through flanking incisions. Probably keeps excising with 3'-flap annealing until it reaches and unhooks the ICL. Acts at sites that have a 5'-terminal phosphate anchor at a nick or a 1- or 2-nucleotide flap and is augmented by a 3' flap. Also has endonuclease activity toward 5'-flaps. The chain is Fanconi-associated nuclease 1 from Homo sapiens (Human).